Consider the following 95-residue polypeptide: Opiscorpine-1 (95 aa).

The first 19 residues, 1-19 (MNNKLTALIFLGLLAIASC), serve as a signal peptide directing secretion. Residues 55–95 (EFMCVANVDMTKSCDTHCQKASGEKGYCHGTKCKCGVPLSY) form the BetaSPN-type CS-alpha/beta domain. 3 cysteine pairs are disulfide-bonded: Cys58-Cys82, Cys68-Cys87, and Cys72-Cys89.

This sequence belongs to the long chain scorpion toxin family. Class 3 subfamily. As to expression, expressed by the venom gland.

It is found in the secreted. The short synthetic peptide (20-54) has antimicrobial activity against the yeasts F.culmorum (IC(50)=8.8 uM) and F.oxysporum (IC(50)=10 uM), and the Gram-negative bacteria E.coli. In Opistophthalmus carinatus (African yellow leg scorpion), this protein is Opiscorpine-1.